An 867-amino-acid polypeptide reads, in one-letter code: Cation/H(+) antiporter 23, chloroplastic (867 aa).

12 helical membrane passes run 43-63 (SGST…VANL), 75-95 (LYLP…PSVL), 112-132 (MVLE…LGLG), 146-166 (VIIA…LYYL), 175-195 (IISG…PDLA), 212-232 (AMCA…FGFA), 242-262 (KMMP…IFVI), 283-303 (HVWF…ACGV), 336-356 (GILM…GFML), 362-382 (FMMV…TVIT), 393-413 (AFAI…VLNA), and 427-447 (HMTI…AFAY). Positions 848-867 (SMYEDEDEDDEEDHQYGIHR) are disordered. The segment covering 851–860 (EDEDEDDEED) has biased composition (acidic residues).

Belongs to the monovalent cation:proton antiporter 2 (CPA2) transporter (TC 2.A.37) family. CHX (TC 2.A.37.4) subfamily. As to expression, specifically expressed in flower buds and pollen. Expressed in leaves, roots and stems.

The protein localises to the plastid. The protein resides in the chloroplast membrane. Its subcellular location is the endoplasmic reticulum membrane. Functionally, operates as a K(+)/H(+) antiporter or Na(+)/H(+) antiporter of the chloroplast envelope that functions in pH homeostasis and chloroplast development. Monovalent cation transporter with a preference for Cs(+), K(+) and Rb(+) relative to Na(+) or Li(+). Required for pollen tube guidance, but not for normal pollen development. May also be involved in the development or function of the female gametophyte. This is Cation/H(+) antiporter 23, chloroplastic (CHX23) from Arabidopsis thaliana (Mouse-ear cress).